The following is a 535-amino-acid chain: CTP synthase (535 aa).

The interval 1–267 (MTKYIFVTGG…DQIVCDHLKL (267 aa)) is amidoligase domain. S13 lines the CTP pocket. Residue S13 participates in UTP binding. 14-19 (SLGKGI) is an ATP binding site. Position 54 (Y54) interacts with L-glutamine. D71 lines the ATP pocket. Positions 71 and 141 each coordinate Mg(2+). CTP contacts are provided by residues 148-150 (DIE), 188-193 (KTKPTQ), and K224. Residues 188–193 (KTKPTQ) and K224 contribute to the UTP site. Residue 240–242 (RDA) coordinates ATP. The region spanning 292–534 (KIALVGKYVE…VRASITNKES (243 aa)) is the Glutamine amidotransferase type-1 domain. An L-glutamine-binding site is contributed by G354. C381 acts as the Nucleophile; for glutamine hydrolysis in catalysis. L-glutamine contacts are provided by residues 382–385 (LGMQ), E405, and R462. Active-site residues include H507 and E509.

This sequence belongs to the CTP synthase family. As to quaternary structure, homotetramer.

It carries out the reaction UTP + L-glutamine + ATP + H2O = CTP + L-glutamate + ADP + phosphate + 2 H(+). The catalysed reaction is L-glutamine + H2O = L-glutamate + NH4(+). It catalyses the reaction UTP + NH4(+) + ATP = CTP + ADP + phosphate + 2 H(+). It participates in pyrimidine metabolism; CTP biosynthesis via de novo pathway; CTP from UDP: step 2/2. Allosterically activated by GTP, when glutamine is the substrate; GTP has no effect on the reaction when ammonia is the substrate. The allosteric effector GTP functions by stabilizing the protein conformation that binds the tetrahedral intermediate(s) formed during glutamine hydrolysis. Inhibited by the product CTP, via allosteric rather than competitive inhibition. Its function is as follows. Catalyzes the ATP-dependent amination of UTP to CTP with either L-glutamine or ammonia as the source of nitrogen. Regulates intracellular CTP levels through interactions with the four ribonucleotide triphosphates. This Bacillus cereus (strain AH820) protein is CTP synthase.